The sequence spans 292 residues: Acetylglutamate kinase (292 aa).

Substrate contacts are provided by residues 64–65, arginine 86, and asparagine 190; that span reads GG.

The protein belongs to the acetylglutamate kinase family. ArgB subfamily.

It localises to the cytoplasm. The enzyme catalyses N-acetyl-L-glutamate + ATP = N-acetyl-L-glutamyl 5-phosphate + ADP. The protein operates within amino-acid biosynthesis; L-arginine biosynthesis; N(2)-acetyl-L-ornithine from L-glutamate: step 2/4. Functionally, catalyzes the ATP-dependent phosphorylation of N-acetyl-L-glutamate. In Pelobacter propionicus (strain DSM 2379 / NBRC 103807 / OttBd1), this protein is Acetylglutamate kinase.